We begin with the raw amino-acid sequence, 448 residues long: 26S proteasome regulatory subunit 4 homolog (448 aa).

The span at 1-10 (MGQAQSGNFS) shows a compositional bias: polar residues. A disordered region spans residues 1-58 (MGQAQSGNFSNFGDGANGDNKKDQKKDKPKYEPPVPTRTGRRKKKAQSGPDASAKLPT). A compositionally biased stretch (basic and acidic residues) spans 19-31 (DNKKDQKKDKPKY). 232–239 (GAPGTGKT) contributes to the ATP binding site.

Belongs to the AAA ATPase family.

It is found in the cytoplasm. The protein resides in the nucleus. In terms of biological role, the 26S proteasome is involved in the ATP-dependent degradation of ubiquitinated proteins. The regulatory (or ATPase) complex confers ATP dependency and substrate specificity to the 26S complex. This chain is 26S proteasome regulatory subunit 4 homolog (mts2), found in Schizosaccharomyces pombe (strain 972 / ATCC 24843) (Fission yeast).